The following is a 454-amino-acid chain: MSDFVDEAVLHLKAGDGGHGCVSIHREKFKPLGGPDGGNGGHGGDVILEVDRNTATLLEYQRRPHRKAENGAPGQGSNRSGASGADLVLPVPDGTVVTTLDGEVIADLVGHGTRLVVARGGRGGLGNAALASPKRKAPGFALKGEPGEKVDIRLELKTIADVGLVGFPSAGKSSLIAAMSAARPKIADYPFTTLVPNLGVVEAGQTQYVVADVPGLIPGASEGKGLGLEFLRHVERCSTLLHVLDCATYEPGRDPISDLEAVERELAVYGERTGVDLSDRPRLVALNKIDVPEARELAELVEPMLVERGYRVLQVSAATREGLKELAYALGEQVAAARAARPPEEPTRLILRPREIGEIPFQVIPLGNNVFRVIGDKPTRWVRQTDFSNDEAVGYLADRLNRLGIEEALAEAGATAGAEVHIGDEDNPVVFDWDPTVDSEQTVLGPRGTDPRLS.

Residues 2-159 (SDFVDEAVLH…VDIRLELKTI (158 aa)) enclose the Obg domain. The tract at residues 60–87 (YQRRPHRKAENGAPGQGSNRSGASGADL) is disordered. An OBG-type G domain is found at 160 to 335 (ADVGLVGFPS…LAYALGEQVA (176 aa)). Residues 166–173 (GFPSAGKS), 191–195 (FTTLV), 212–215 (DVPG), 287–290 (NKID), and 316–318 (SAA) each bind GTP. Mg(2+) contacts are provided by Ser-173 and Thr-193. An OCT domain is found at 353 to 435 (PREIGEIPFQ…DNPVVFDWDP (83 aa)).

This sequence belongs to the TRAFAC class OBG-HflX-like GTPase superfamily. OBG GTPase family. Monomer. Mg(2+) serves as cofactor.

The protein localises to the cytoplasm. In terms of biological role, an essential GTPase which binds GTP, GDP and possibly (p)ppGpp with moderate affinity, with high nucleotide exchange rates and a fairly low GTP hydrolysis rate. Plays a role in control of the cell cycle, stress response, ribosome biogenesis and in those bacteria that undergo differentiation, in morphogenesis control. The chain is GTPase Obg from Thermobifida fusca (strain YX).